The chain runs to 54 residues: MPSTKPPKERPYGKSKIRCLRCGTREAVIRKYGLYLCRRCFREVAPQLGFKKYY.

The Zn(2+) site is built by Cys19, Cys22, Cys37, and Cys40.

The protein belongs to the universal ribosomal protein uS14 family. Zinc-binding uS14 subfamily. As to quaternary structure, part of the 30S ribosomal subunit. Zn(2+) is required as a cofactor.

Functionally, binds 16S rRNA, required for the assembly of 30S particles. The protein is Small ribosomal subunit protein uS14 of Pyrobaculum aerophilum (strain ATCC 51768 / DSM 7523 / JCM 9630 / CIP 104966 / NBRC 100827 / IM2).